A 90-amino-acid chain; its full sequence is MSSKTRKSSRVILEHEYVPEHRLLSIEEAVQVLKMLGIKPWQLPKISVNDPIARLLKAKPGDIIEITRRSYTAGEAKYYRFVVAYQKGVK.

Belongs to the archaeal Rpo5/eukaryotic RPB5 RNA polymerase subunit family. In terms of assembly, part of the RNA polymerase complex.

It is found in the cytoplasm. The enzyme catalyses RNA(n) + a ribonucleoside 5'-triphosphate = RNA(n+1) + diphosphate. DNA-dependent RNA polymerase (RNAP) catalyzes the transcription of DNA into RNA using the four ribonucleoside triphosphates as substrates. This is DNA-directed RNA polymerase subunit Rpo5 from Aeropyrum pernix (strain ATCC 700893 / DSM 11879 / JCM 9820 / NBRC 100138 / K1).